The following is a 301-amino-acid chain: Recombination-associated protein RdgC (301 aa).

It belongs to the RdgC family.

It is found in the cytoplasm. The protein localises to the nucleoid. In terms of biological role, may be involved in recombination. The protein is Recombination-associated protein RdgC of Xanthomonas axonopodis pv. citri (strain 306).